Here is a 128-residue protein sequence, read N- to C-terminus: Large ribosomal subunit protein bL12 (128 aa).

Belongs to the bacterial ribosomal protein bL12 family. In terms of assembly, homodimer. Part of the ribosomal stalk of the 50S ribosomal subunit. Forms a multimeric L10(L12)X complex, where L10 forms an elongated spine to which 2 to 4 L12 dimers bind in a sequential fashion. Binds GTP-bound translation factors.

In terms of biological role, forms part of the ribosomal stalk which helps the ribosome interact with GTP-bound translation factors. Is thus essential for accurate translation. The chain is Large ribosomal subunit protein bL12 from Sulfurihydrogenibium sp. (strain YO3AOP1).